We begin with the raw amino-acid sequence, 470 residues long: 3-isopropylmalate dehydratase large subunit (470 aa).

Positions 348, 409, and 412 each coordinate [4Fe-4S] cluster.

It belongs to the aconitase/IPM isomerase family. LeuC type 1 subfamily. In terms of assembly, heterodimer of LeuC and LeuD. [4Fe-4S] cluster serves as cofactor.

It catalyses the reaction (2R,3S)-3-isopropylmalate = (2S)-2-isopropylmalate. It functions in the pathway amino-acid biosynthesis; L-leucine biosynthesis; L-leucine from 3-methyl-2-oxobutanoate: step 2/4. Functionally, catalyzes the isomerization between 2-isopropylmalate and 3-isopropylmalate, via the formation of 2-isopropylmaleate. The chain is 3-isopropylmalate dehydratase large subunit from Thioalkalivibrio sulfidiphilus (strain HL-EbGR7).